The following is a 126-amino-acid chain: MIRTMLQGKLHRVKVTQADLHYEGSCAIDQDFLDASGILENEAIDIWNVTNGKRFSTYAIAAERGSRIISVNGAAAHCAEVGDIVIIASFVTMSDEEARTWSPKVAYFEGDNEMKRTAKAIPVQVA.

Serine 25 (schiff-base intermediate with substrate; via pyruvic acid) is an active-site residue. Serine 25 bears the Pyruvic acid (Ser) mark. Residue threonine 57 participates in substrate binding. Tyrosine 58 functions as the Proton donor in the catalytic mechanism. Position 73–75 (73–75 (GAA)) interacts with substrate.

Belongs to the PanD family. In terms of assembly, heterooctamer of four alpha and four beta subunits. Pyruvate serves as cofactor. Post-translationally, is synthesized initially as an inactive proenzyme, which is activated by self-cleavage at a specific serine bond to produce a beta-subunit with a hydroxyl group at its C-terminus and an alpha-subunit with a pyruvoyl group at its N-terminus.

It localises to the cytoplasm. The enzyme catalyses L-aspartate + H(+) = beta-alanine + CO2. It functions in the pathway cofactor biosynthesis; (R)-pantothenate biosynthesis; beta-alanine from L-aspartate: step 1/1. Functionally, catalyzes the pyruvoyl-dependent decarboxylation of aspartate to produce beta-alanine. This chain is Aspartate 1-decarboxylase, found in Salmonella dublin (strain CT_02021853).